Here is a 305-residue protein sequence, read N- to C-terminus: Sulfate adenylyltransferase subunit 2 (305 aa).

Belongs to the PAPS reductase family. CysD subfamily. As to quaternary structure, heterodimer composed of CysD, the smaller subunit, and CysN.

It catalyses the reaction sulfate + ATP + H(+) = adenosine 5'-phosphosulfate + diphosphate. It functions in the pathway sulfur metabolism; hydrogen sulfide biosynthesis; sulfite from sulfate: step 1/3. With CysN forms the ATP sulfurylase (ATPS) that catalyzes the adenylation of sulfate producing adenosine 5'-phosphosulfate (APS) and diphosphate, the first enzymatic step in sulfur assimilation pathway. APS synthesis involves the formation of a high-energy phosphoric-sulfuric acid anhydride bond driven by GTP hydrolysis by CysN coupled to ATP hydrolysis by CysD. In Pseudomonas syringae pv. tomato (strain ATCC BAA-871 / DC3000), this protein is Sulfate adenylyltransferase subunit 2.